A 96-amino-acid chain; its full sequence is Large ribosomal subunit protein uL23 (96 aa).

The protein belongs to the universal ribosomal protein uL23 family. As to quaternary structure, part of the 50S ribosomal subunit. Contacts protein L29, and trigger factor when it is bound to the ribosome.

In terms of biological role, one of the early assembly proteins it binds 23S rRNA. One of the proteins that surrounds the polypeptide exit tunnel on the outside of the ribosome. Forms the main docking site for trigger factor binding to the ribosome. In Alkaliphilus metalliredigens (strain QYMF), this protein is Large ribosomal subunit protein uL23.